The following is a 776-amino-acid chain: GATOR2 complex protein Wdr24 (776 aa).

WD repeat units lie at residues 63-103 (NLSY…RQKQ), 109-149 (EHER…SINT), 152-192 (CNSE…KCMV), 196-235 (AHYG…GLEH), 238-280 (HTIA…IPFA), and 284-326 (EHTN…ALKA). The disordered stretch occupies residues 466 to 490 (HRSSFSNQKNPMNSRRATQVASDWP). Polar residues predominate over residues 469–490 (SFSNQKNPMNSRRATQVASDWP). A C4-type zinc finger spans residues 703-726 (NCGECGRPMGGKVGWYCDKCKSMQ). Zn(2+) contacts are provided by C704, C707, C719, C722, C730, C733, C744, C747, H749, H752, H755, C766, C769, H771, and C773. The RING-type; atypical zinc finger occupies 728-776 (AKCCVCGLIVRGVYAWCQGCSHGGHIEHLQKYFAKHSKCPKCGHLCAYS).

Belongs to the WD repeat WDR24 family. As to quaternary structure, component of the GATOR complex consisting of mio, Nup44A/Seh1, Im11, Nplr3, Nplr2, Wdr24, Wdr59 and Sec13. Within the GATOR complex, probable component of the GATOR2 subcomplex which is likely composed of mio, Nup44A/Seh1, Wdr24, Wdr59 and Sec13. Interacts with Nup44A/Seh1. Interacts with mio. Interacts with Nplr3. The GATOR2 complex associates with unmet in the absence of S-adenosyl-L-methionine; the mio-Wdr24-Nup44A subcomplex is essential and sufficient for this interaction while Wdr59 and Sec13 are dispensable. This association acts as a nutrient sensor to inhibit mTORC1 signaling in the absence of methionine.

The protein localises to the lysosome. The protein resides in the cytoplasmic vesicle. It localises to the autophagosome. The catalysed reaction is S-ubiquitinyl-[E2 ubiquitin-conjugating enzyme]-L-cysteine + [acceptor protein]-L-lysine = [E2 ubiquitin-conjugating enzyme]-L-cysteine + N(6)-ubiquitinyl-[acceptor protein]-L-lysine.. The protein operates within protein modification; protein ubiquitination. Functionally, an essential component of the GATOR subcomplex GATOR2 which functions as an activator of the amino acid-sensing branch of the mTORC1 signaling pathway. The two GATOR subcomplexes, GATOR1 and GATOR2, regulate the mTORC1 pathway in order to mediate metabolic homeostasis, female gametogenesis and the response to amino acid limitation and complete starvation. GATOR2 activates the mTORC1 signaling pathway through the inhibition of the GATOR1 subcomplex, controlling the switch to cell proliferation and growth under nutrient replete conditions and during female oocyte development. GATOR2 probably acts as an E3 ubiquitin-protein ligase toward GATOR1. In the presence of abundant amino acids, the GATOR2 complex mediates ubiquitination of components of the GATOR1 complex, leading to GATOR1 inactivation. This GATOR2 component is required for activating mTORC1 and promoting cell growth in both germline and somatic cells. In addition to its role in regulation of the mTORC1 complex, functions independently of mTORC1 to promote the acidification of lysosomes and facilitates autophagic flux. This is GATOR2 complex protein Wdr24 from Drosophila melanogaster (Fruit fly).